A 272-amino-acid chain; its full sequence is Exosome complex component Rrp42 (272 aa).

This sequence belongs to the RNase PH family. Rrp42 subfamily. Component of the archaeal exosome complex. Forms a hexameric ring-like arrangement composed of 3 Rrp41-Rrp42 heterodimers. The hexameric ring associates with a trimer of Rrp4 and/or Csl4 subunits.

It localises to the cytoplasm. In terms of biological role, non-catalytic component of the exosome, which is a complex involved in RNA degradation. Contributes to the structuring of the Rrp41 active site. This is Exosome complex component Rrp42 from Thermococcus onnurineus (strain NA1).